The following is a 156-amino-acid chain: UPF0039 protein Mb2876c (156 aa).

The N-acetyltransferase domain occupies 8 to 150 (VWAKDLDARA…PHVPMLRPGS (143 aa)).

Belongs to the UPF0039 (ElaA) family.

The chain is UPF0039 protein Mb2876c from Mycobacterium bovis (strain ATCC BAA-935 / AF2122/97).